The sequence spans 285 residues: Ribonuclease H1 (285 aa).

Positions 72-126 are disordered; the sequence is RSSSSPDGSKGQESAHEQKSQAKTSKRPREPLGEGEELPEPGPKHTRQDTEPAAV. Residues 135–281 enclose the RNase H type-1 domain; sequence MGESVIVYTD…ADRLAREGAK (147 aa). The Mg(2+) site is built by D144, E185, D209, and D273.

The protein belongs to the RNase H family. As to quaternary structure, monomer. Mg(2+) is required as a cofactor.

The protein localises to the cytoplasm. It catalyses the reaction Endonucleolytic cleavage to 5'-phosphomonoester.. Its activity is regulated as follows. In the presence of magnesium, manganese is inhibitory. Functionally, endonuclease that specifically degrades the RNA of RNA-DNA hybrids. Plays a role in RNA polymerase II (RNAp II) transcription termination by degrading R-loop RNA-DNA hybrid formation at G-rich pause sites located downstream of the poly(A) site and behind the elongating RNAp II. The chain is Ribonuclease H1 (Rnaseh1) from Mus musculus (Mouse).